Consider the following 53-residue polypeptide: uncharacterized protein (53 aa).

A helical membrane pass occupies residues 20-42 (ILFPVLLVFDTILIVVGIALILF).

It localises to the membrane. This is an uncharacterized protein from Archaeoglobus fulgidus (strain ATCC 49558 / DSM 4304 / JCM 9628 / NBRC 100126 / VC-16).